We begin with the raw amino-acid sequence, 403 residues long: Acetyl-CoA acetyltransferase 2 (403 aa).

Cys-97 functions as the Acyl-thioester intermediate in the catalytic mechanism. Lys-237 contacts CoA. Ala-254 is a binding site for K(+). Residue Ser-258 participates in CoA binding. Val-355 lines the K(+) pocket. Residues His-359 and Cys-389 each act as proton acceptor in the active site.

Belongs to the thiolase-like superfamily. Thiolase family. Expressed in root tips, emerging leaves, young leaves, stems, and anthers at the microspore stage.

It localises to the cytoplasm. It is found in the peroxisome. It catalyses the reaction 2 acetyl-CoA = acetoacetyl-CoA + CoA. It functions in the pathway metabolic intermediate biosynthesis; (R)-mevalonate biosynthesis; (R)-mevalonate from acetyl-CoA: step 1/3. Functionally, catalyzes the condensation of two molecules of acetyl-CoA to produce acetoacetyl-CoA. Generates the bulk of the acetoacetyl-CoA precursor required for the cytosol-localized, mevalonate-derived isoprenoid biosynthesis. The generated isoprenoids are required for normal growth and development. Essential protein during embryogenesis. The sequence is that of Acetyl-CoA acetyltransferase 2 from Arabidopsis thaliana (Mouse-ear cress).